The primary structure comprises 294 residues: 4-hydroxy-tetrahydrodipicolinate synthase (294 aa).

T47 serves as a coordination point for pyruvate. The Proton donor/acceptor role is filled by Y135. Residue K163 is the Schiff-base intermediate with substrate of the active site. I205 lines the pyruvate pocket.

It belongs to the DapA family. As to quaternary structure, homotetramer; dimer of dimers.

It localises to the cytoplasm. The enzyme catalyses L-aspartate 4-semialdehyde + pyruvate = (2S,4S)-4-hydroxy-2,3,4,5-tetrahydrodipicolinate + H2O + H(+). It functions in the pathway amino-acid biosynthesis; L-lysine biosynthesis via DAP pathway; (S)-tetrahydrodipicolinate from L-aspartate: step 3/4. In terms of biological role, catalyzes the condensation of (S)-aspartate-beta-semialdehyde [(S)-ASA] and pyruvate to 4-hydroxy-tetrahydrodipicolinate (HTPA). The chain is 4-hydroxy-tetrahydrodipicolinate synthase from Rickettsia prowazekii (strain Madrid E).